Reading from the N-terminus, the 250-residue chain is 7-carboxy-7-deazaguanine synthase (250 aa).

Substrate-binding positions include 15-17 and arginine 30; that span reads VQG. The 230-residue stretch at 21–250 folds into the Radical SAM core domain; sequence LIGLRQVFIR…PQTHRFMGQL (230 aa). [4Fe-4S] cluster is bound by residues cysteine 34, cysteine 38, and cysteine 41. Threonine 43 is a binding site for Mg(2+). Threonine 96 is a substrate binding site. Glycine 98 is an S-adenosyl-L-methionine binding site.

It belongs to the radical SAM superfamily. 7-carboxy-7-deazaguanine synthase family. As to quaternary structure, homodimer. Requires [4Fe-4S] cluster as cofactor. It depends on S-adenosyl-L-methionine as a cofactor. Mg(2+) serves as cofactor.

It carries out the reaction 6-carboxy-5,6,7,8-tetrahydropterin + H(+) = 7-carboxy-7-deazaguanine + NH4(+). It participates in purine metabolism; 7-cyano-7-deazaguanine biosynthesis. Catalyzes the complex heterocyclic radical-mediated conversion of 6-carboxy-5,6,7,8-tetrahydropterin (CPH4) to 7-carboxy-7-deazaguanine (CDG), a step common to the biosynthetic pathways of all 7-deazapurine-containing compounds. The polypeptide is 7-carboxy-7-deazaguanine synthase (Geobacter sulfurreducens (strain ATCC 51573 / DSM 12127 / PCA)).